The primary structure comprises 194 residues: Phosphoheptose isomerase (194 aa).

One can recognise an SIS domain in the interval 37-194 (ISNSFKQGGK…LIEFEMAKQA (158 aa)). 52–54 (NGG) contributes to the substrate binding site. The Zn(2+) site is built by His-61 and Glu-65. Residues Glu-65, 93 to 94 (ND), 119 to 121 (STS), Ser-124, and Gln-172 contribute to the substrate site. Zn(2+) contacts are provided by Gln-172 and His-180.

This sequence belongs to the SIS family. GmhA subfamily. Homotetramer. Requires Zn(2+) as cofactor.

The protein resides in the cytoplasm. It carries out the reaction 2 D-sedoheptulose 7-phosphate = D-glycero-alpha-D-manno-heptose 7-phosphate + D-glycero-beta-D-manno-heptose 7-phosphate. It participates in carbohydrate biosynthesis; D-glycero-D-manno-heptose 7-phosphate biosynthesis; D-glycero-alpha-D-manno-heptose 7-phosphate and D-glycero-beta-D-manno-heptose 7-phosphate from sedoheptulose 7-phosphate: step 1/1. Functionally, catalyzes the isomerization of sedoheptulose 7-phosphate in D-glycero-D-manno-heptose 7-phosphate. This Actinobacillus pleuropneumoniae serotype 5b (strain L20) protein is Phosphoheptose isomerase.